A 490-amino-acid chain; its full sequence is Phosphoglucosamine mutase (490 aa).

Ser-139 functions as the Phosphoserine intermediate in the catalytic mechanism. The Mg(2+) site is built by Ser-139, Asp-279, Asp-281, and Asp-283. Ser-139 carries the post-translational modification Phosphoserine.

This sequence belongs to the phosphohexose mutase family. Mg(2+) serves as cofactor. In terms of processing, activated by phosphorylation.

The catalysed reaction is alpha-D-glucosamine 1-phosphate = D-glucosamine 6-phosphate. Catalyzes the conversion of glucosamine-6-phosphate to glucosamine-1-phosphate. In Nostoc punctiforme (strain ATCC 29133 / PCC 73102), this protein is Phosphoglucosamine mutase.